We begin with the raw amino-acid sequence, 154 residues long: Interleukin-2 (154 aa).

Positions 1–20 (MYKMQLLCCIALTLALMANG) are cleaved as a signal peptide. A glycan (O-linked (GalNAc...) threonine) is linked at Thr-23. An intrachain disulfide couples Cys-78 to Cys-126.

This sequence belongs to the IL-2 family.

The protein resides in the secreted. Its function is as follows. Cytokine produced by activated CD4-positive helper T-cells and to a lesser extend activated CD8-positive T-cells and natural killer (NK) cells that plays pivotal roles in the immune response and tolerance. Binds to a receptor complex composed of either the high-affinity trimeric IL-2R (IL2RA/CD25, IL2RB/CD122 and IL2RG/CD132) or the low-affinity dimeric IL-2R (IL2RB and IL2RG). Interaction with the receptor leads to oligomerization and conformation changes in the IL-2R subunits resulting in downstream signaling starting with phosphorylation of JAK1 and JAK3. In turn, JAK1 and JAK3 phosphorylate the receptor to form a docking site leading to the phosphorylation of several substrates including STAT5. This process leads to activation of several pathways including STAT, phosphoinositide-3-kinase/PI3K and mitogen-activated protein kinase/MAPK pathways. Functions as a T-cell growth factor and can increase NK-cell cytolytic activity as well. Promotes strong proliferation of activated B-cells and subsequently immunoglobulin production. Plays a pivotal role in regulating the adaptive immune system by controlling the survival and proliferation of regulatory T-cells, which are required for the maintenance of immune tolerance. Moreover, participates in the differentiation and homeostasis of effector T-cell subsets, including Th1, Th2, Th17 as well as memory CD8-positive T-cells. The sequence is that of Interleukin-2 (IL2) from Sus scrofa (Pig).